Consider the following 452-residue polypeptide: Exodeoxyribonuclease 7 large subunit (452 aa).

The protein belongs to the XseA family. Heterooligomer composed of large and small subunits.

It is found in the cytoplasm. The enzyme catalyses Exonucleolytic cleavage in either 5'- to 3'- or 3'- to 5'-direction to yield nucleoside 5'-phosphates.. In terms of biological role, bidirectionally degrades single-stranded DNA into large acid-insoluble oligonucleotides, which are then degraded further into small acid-soluble oligonucleotides. The chain is Exodeoxyribonuclease 7 large subunit from Bacillus cereus (strain G9842).